The chain runs to 464 residues: Na(+)/H(+) antiporter NhaA (464 aa).

Helical transmembrane passes span 37 to 57 (GSGILLVFLTIVALVFANTSC), 82 to 102 (IHYWINDALMTLFFLMVGLEI), 118 to 138 (VLPIFAALGGMIVPALIYFSF), 145 to 165 (VSGWGIPMATDIAFAIAILLL), 176 to 196 (AVLVALAIVDDLGAVIVIAIF), 200 to 220 (NLAWSPLIAAFLCFAVLLLLN), 226 to 246 (ALWAYIAIGSLMWVFMLFSGV), 248 to 268 (ATVAGVLTALATPMNAVYSPT), 321 to 341 (ILNTPVYFLIVPLFVLFNAGV), 360 to 380 (VFFGLVFGKLIGVVSAIMICV), 396 to 416 (VLGIGMLAGIGFTMSIFVSEL), and 430 to 450 (ITILAASLTAATLGYCWLRFI).

It belongs to the NhaA Na(+)/H(+) (TC 2.A.33) antiporter family.

It localises to the cell inner membrane. It carries out the reaction Na(+)(in) + 2 H(+)(out) = Na(+)(out) + 2 H(+)(in). In terms of biological role, na(+)/H(+) antiporter that extrudes sodium in exchange for external protons. The protein is Na(+)/H(+) antiporter NhaA of Dichelobacter nodosus (strain VCS1703A).